We begin with the raw amino-acid sequence, 576 residues long: DNA mismatch repair protein MutL (576 aa).

Belongs to the DNA mismatch repair MutL/HexB family.

Functionally, this protein is involved in the repair of mismatches in DNA. It is required for dam-dependent methyl-directed DNA mismatch repair. May act as a 'molecular matchmaker', a protein that promotes the formation of a stable complex between two or more DNA-binding proteins in an ATP-dependent manner without itself being part of a final effector complex. The sequence is that of DNA mismatch repair protein MutL from Chlamydia trachomatis serovar A (strain ATCC VR-571B / DSM 19440 / HAR-13).